A 179-amino-acid polypeptide reads, in one-letter code: Large ribosomal subunit protein uL6 (179 aa).

Belongs to the universal ribosomal protein uL6 family. Part of the 50S ribosomal subunit.

Its function is as follows. This protein binds to the 23S rRNA, and is important in its secondary structure. It is located near the subunit interface in the base of the L7/L12 stalk, and near the tRNA binding site of the peptidyltransferase center. In Chlorobaculum tepidum (strain ATCC 49652 / DSM 12025 / NBRC 103806 / TLS) (Chlorobium tepidum), this protein is Large ribosomal subunit protein uL6.